A 60-amino-acid polypeptide reads, in one-letter code: Large ribosomal subunit protein bL32 (60 aa).

This sequence belongs to the bacterial ribosomal protein bL32 family.

The polypeptide is Large ribosomal subunit protein bL32 (Borrelia hermsii (strain HS1 / DAH)).